We begin with the raw amino-acid sequence, 77 residues long: uncharacterized protein (77 aa).

2 helical membrane passes run 3–23 (FNFI…SFLF) and 35–55 (IGAI…VALL).

Its subcellular location is the cell membrane. This is an uncharacterized protein from Haemophilus influenzae (strain ATCC 51907 / DSM 11121 / KW20 / Rd).